A 234-amino-acid chain; its full sequence is NLP effector protein 10 (234 aa).

An N-terminal signal peptide occupies residues 1 to 17; the sequence is MFKTFIIAAVAVATVRA. An N-linked (GlcNAc...) asparagine glycan is attached at Asn65. A Conserved undecapeptide motif I motif is present at residues 101–111; it reads AIMYSWYFPKD. The Hepta-peptide GHRHDWE motif II motif lies at 118 to 124; it reads GHRHDWE.

This sequence belongs to the Necrosis inducing protein (NPP1) family.

It localises to the secreted. Functionally, secreted effector that contributes moderately to virulence during infection by P.capsici. Does not cause visible reaction of C.annuum for several days after inoculation, but by 7 days after inoculation, small necrotic lesions become visible. Leads only to chlorotic areas, without necrosis at 7 days after non-host N.benthamiana leaves infection. The protein is NLP effector protein 10 of Phytophthora capsici.